The primary structure comprises 180 residues: Putative phycocyanobilin lyase CpcS 2 (180 aa).

Belongs to the CpcS/CpeS biliprotein lyase family.

Functionally, covalently attaches a chromophore to Cys residue(s) of phycobiliproteins (Potential). In vitro does not act as a chromophore lyase for ApcA1, ApcA2, ApcB, ApcD, ApcF, CpcB or PecB, the lyase activity is therefore unsure. In Nostoc sp. (strain PCC 7120 / SAG 25.82 / UTEX 2576), this protein is Putative phycocyanobilin lyase CpcS 2 (cpeS2).